The sequence spans 431 residues: STE20-related kinase adapter protein alpha (431 aa).

Residues Ser2 and Ser46 each carry the phosphoserine modification. The Protein kinase domain occupies 69–379 (YELLTVIGKG…ASTLLNHSFF (311 aa)). Residues 310–347 (LTMSPSRSVANSGLSDSLTTSTPRPSNGDSPSHPYHRT) are disordered. The segment covering 312 to 339 (MSPSRSVANSGLSDSLTTSTPRPSNGDS) has biased composition (polar residues). Residues Thr329 and Thr419 each carry the phosphothreonine; by LKB1 modification.

It belongs to the protein kinase superfamily. STE Ser/Thr protein kinase family. STE20 subfamily. Component of a trimeric complex composed of STK11/LKB1, STRAD (STRADA or STRADB) and CAB39/MO25 (CAB39/MO25alpha or CAB39L/MO25beta): the complex tethers STK11/LKB1 in the cytoplasm and stimulates its catalytic activity.

It is found in the nucleus. It localises to the cytoplasm. Pseudokinase which, in complex with CAB39/MO25 (CAB39/MO25alpha or CAB39L/MO25beta), binds to and activates STK11/LKB1. Adopts a closed conformation typical of active protein kinases and binds STK11/LKB1 as a pseudosubstrate, promoting conformational change of STK11/LKB1 in an active conformation. The protein is STE20-related kinase adapter protein alpha (STRADA) of Homo sapiens (Human).